A 270-amino-acid chain; its full sequence is Formamidopyrimidine-DNA glycosylase (270 aa).

Pro2 acts as the Schiff-base intermediate with DNA in catalysis. Glu3 serves as the catalytic Proton donor. Lys58 functions as the Proton donor; for beta-elimination activity in the catalytic mechanism. 3 residues coordinate DNA: His91, Arg110, and Lys151. The segment at 236 to 270 (FAYGRGGQPCKVCGTTLREIKLGQRASVYCPKCQR) adopts an FPG-type zinc-finger fold. Arg260 acts as the Proton donor; for delta-elimination activity in catalysis.

The protein belongs to the FPG family. Monomer. The cofactor is Zn(2+).

It catalyses the reaction Hydrolysis of DNA containing ring-opened 7-methylguanine residues, releasing 2,6-diamino-4-hydroxy-5-(N-methyl)formamidopyrimidine.. It carries out the reaction 2'-deoxyribonucleotide-(2'-deoxyribose 5'-phosphate)-2'-deoxyribonucleotide-DNA = a 3'-end 2'-deoxyribonucleotide-(2,3-dehydro-2,3-deoxyribose 5'-phosphate)-DNA + a 5'-end 5'-phospho-2'-deoxyribonucleoside-DNA + H(+). In terms of biological role, involved in base excision repair of DNA damaged by oxidation or by mutagenic agents. Acts as a DNA glycosylase that recognizes and removes damaged bases. Has a preference for oxidized purines, such as 7,8-dihydro-8-oxoguanine (8-oxoG). Has AP (apurinic/apyrimidinic) lyase activity and introduces nicks in the DNA strand. Cleaves the DNA backbone by beta-delta elimination to generate a single-strand break at the site of the removed base with both 3'- and 5'-phosphates. The chain is Formamidopyrimidine-DNA glycosylase from Pseudomonas syringae pv. tomato (strain ATCC BAA-871 / DC3000).